The chain runs to 163 residues: MTDFTHLDDQGRVRMVDVAGKDVTRRVAIARGRIDMTADTLDRIFGRNVKKGNVLEAARIAGVMAAKRTADLIPMCHPLNLTHVRVDFFPDPGHNRIEIEAEASLAGRTGVEMEALTAVSVAALTIYDMCKSYDKGMIISDIHLKSKTGGKSGTFLADRYGHP.

Substrate is bound by residues 75–77 and 113–114; these read MCH and ME. Asp128 is an active-site residue.

This sequence belongs to the MoaC family. Homohexamer; trimer of dimers.

The catalysed reaction is (8S)-3',8-cyclo-7,8-dihydroguanosine 5'-triphosphate = cyclic pyranopterin phosphate + diphosphate. It functions in the pathway cofactor biosynthesis; molybdopterin biosynthesis. Its function is as follows. Catalyzes the conversion of (8S)-3',8-cyclo-7,8-dihydroguanosine 5'-triphosphate to cyclic pyranopterin monophosphate (cPMP). This is Cyclic pyranopterin monophosphate synthase from Desulforapulum autotrophicum (strain ATCC 43914 / DSM 3382 / VKM B-1955 / HRM2) (Desulfobacterium autotrophicum).